The chain runs to 43 residues: Defensin-A (43 aa).

3 disulfides stabilise this stretch: cysteine 3–cysteine 34, cysteine 20–cysteine 39, and cysteine 24–cysteine 41.

The protein localises to the secreted. Its function is as follows. Antibacterial protein. Strong activity against the Gram-positive bacteria M.luteus, B.megaterium and S.aureus. Reduced activity against Gram-positive bacterium B.subtilis and weak activity against Gram-negative bacterium X.japonicus. No detectable activity against the Gram-negative bacteria E.asbriae, E.coli, P.aeruginosa and S.marcescens. This Anomala cuprea (Cupreous chafer beetle) protein is Defensin-A.